The sequence spans 421 residues: Lipid II:glycine glycyltransferase (421 aa).

Belongs to the FemABX family. As to quaternary structure, monomer.

The protein localises to the cytoplasm. The catalysed reaction is beta-D-GlcNAc-(1-&gt;4)-Mur2Ac(oyl-L-Ala-D-isoglutaminyl-L-Lys-D-Ala-D-Ala)-di-trans,octa-cis-undecaprenyl diphosphate + glycyl-tRNA(Gly) = beta-D-GlcNAc-(1-&gt;4)-Mur2Ac(oyl-L-Ala-D-isoglutaminyl-L-Lys-(N(6)-Gly)-D-Ala-D-Ala)-di-trans,octa-cis-undecaprenyl diphosphate + tRNA(Gly) + H(+). Catalyzes the incorporation of the first glycine of the pentaglycine interpeptide bridge, which is characteristic of the S.aureus peptidoglycan. This glycine is added to the epsilon-amino group of the L-lysine of the membrane-bound lipid II intermediate (GlcNAc-(beta-1,4)-N-acetylmuramic acid(-L-Ala-D-iGln-L-Lys-D-Ala-D-Ala)-pyrophosphoryl-undecaprenol), using glycyl-tRNA(Gly) as donor, in a ribosome-independent mechanism. This chain is Lipid II:glycine glycyltransferase (femX), found in Staphylococcus aureus (strain bovine RF122 / ET3-1).